The following is a 354-amino-acid chain: UDP-N-acetylglucosamine--N-acetylmuramyl-(pentapeptide) pyrophosphoryl-undecaprenol N-acetylglucosamine transferase (354 aa).

Residues threonine 14–glycine 16, asparagine 126, arginine 162, serine 190, isoleucine 243, alanine 262–glutamate 267, and glutamine 287 each bind UDP-N-acetyl-alpha-D-glucosamine.

Belongs to the glycosyltransferase 28 family. MurG subfamily.

Its subcellular location is the cell inner membrane. It carries out the reaction di-trans,octa-cis-undecaprenyl diphospho-N-acetyl-alpha-D-muramoyl-L-alanyl-D-glutamyl-meso-2,6-diaminopimeloyl-D-alanyl-D-alanine + UDP-N-acetyl-alpha-D-glucosamine = di-trans,octa-cis-undecaprenyl diphospho-[N-acetyl-alpha-D-glucosaminyl-(1-&gt;4)]-N-acetyl-alpha-D-muramoyl-L-alanyl-D-glutamyl-meso-2,6-diaminopimeloyl-D-alanyl-D-alanine + UDP + H(+). It participates in cell wall biogenesis; peptidoglycan biosynthesis. Cell wall formation. Catalyzes the transfer of a GlcNAc subunit on undecaprenyl-pyrophosphoryl-MurNAc-pentapeptide (lipid intermediate I) to form undecaprenyl-pyrophosphoryl-MurNAc-(pentapeptide)GlcNAc (lipid intermediate II). This chain is UDP-N-acetylglucosamine--N-acetylmuramyl-(pentapeptide) pyrophosphoryl-undecaprenol N-acetylglucosamine transferase, found in Photobacterium profundum (strain SS9).